A 318-amino-acid polypeptide reads, in one-letter code: NLP effector protein 7 (318 aa).

Residues 1–19 (MRLFAFLWSSVAFLSTVQA) form the signal peptide. The segment covering 23 to 41 (QTASQTQDDSSTPTPTPTD) has biased composition (low complexity). Disordered regions lie at residues 23-42 (QTAS…PTDK) and 51-96 (RTKT…TPDP). Residues 55–65 (PMATPNRTIMP) are compositionally biased toward polar residues. A glycan (N-linked (GlcNAc...) asparagine) is linked at asparagine 60. Positions 73 to 96 (TEPPTPEPTYLPTPSPTPAPTPDP) are enriched in pro residues. Residues 185–195 (AIMYSWYFPKD) carry the Conserved undecapeptide motif I motif. A Hepta-peptide GHRHDWE motif II motif is present at residues 202–208 (GHRHDWE).

It belongs to the Necrosis inducing protein (NPP1) family.

Its subcellular location is the secreted. Its function is as follows. Secreted effector that contributes moderately to virulence during infection by P.capsici. Does not cause visible reaction of C.annuum for several days after inoculation, but by 7 days after inoculation, small necrotic lesions become visible. Leads only to chlorotic areas, without necrosis at 7 days after non-host N.benthamiana leaves infection. The polypeptide is NLP effector protein 7 (Phytophthora capsici).